A 354-amino-acid polypeptide reads, in one-letter code: Squamosa promoter-binding-like protein 15 (354 aa).

The segment at 1 to 25 (MELLMCSGQAESGGSSSTESSSLSG) is disordered. A compositionally biased stretch (low complexity) spans 7-25 (SGQAESGGSSSTESSSLSG). The SBP-type zinc-finger motif lies at 56 to 133 (TARCQVEGCR…ACHNERRRKP (78 aa)). Zn(2+)-binding residues include C59, C64, C81, H84, C100, C103, H107, and C119. The short motif at 116–132 (KRSCRRRLACHNERRRK) is the Bipartite nuclear localization signal element.

Zn(2+) is required as a cofactor.

Its subcellular location is the nucleus. Trans-acting factor that binds specifically to the consensus nucleotide sequence 5'-TNCGTACAA-3'. The sequence is that of Squamosa promoter-binding-like protein 15 (SPL15) from Arabidopsis thaliana (Mouse-ear cress).